Reading from the N-terminus, the 302-residue chain is MGMIGSGLLLIDKPGGWTSHDVVARVRRLAGTRKVGHAGTLDPMATGLLVLGLNSSTRLLTYIVGAEKEYVGTIRLGAATTTDDIEGEILERAEPAALAAVAESSIAEGIAALTGEIEQVPSAVSAVKVDGKRAYARVRAGEEVVLPARAVTVSAFRLLSERREQDAIDLEVRVVCSSGTYIRSLARDLGARLGVGGHLAALRRTRVGGYDVRRAHELATLEPAAALIPATEAASSLFERLRLTEQQATDLAHGKRLHLAGWEGPRGEPVAAIAPSGSLVGLIEFRGKEARTLVNFPADEIA.

Asp42 acts as the Nucleophile in catalysis.

Belongs to the pseudouridine synthase TruB family. Type 1 subfamily.

The catalysed reaction is uridine(55) in tRNA = pseudouridine(55) in tRNA. Functionally, responsible for synthesis of pseudouridine from uracil-55 in the psi GC loop of transfer RNAs. This is tRNA pseudouridine synthase B from Leifsonia xyli subsp. xyli (strain CTCB07).